Consider the following 1203-residue polypeptide: Cingulin (1203 aa).

A head region spans residues 7–357 (MAEPRGPVDH…VMISSGSTKA (351 aa)). Residues 25-48 (EPVSGAEMGTLRRGGRRPAKDARA) form a disordered region. Positions 48–62 (ASTYGVAVRVQGIAG) match the ZIM motif. The interaction with TJP1/ZO1 stretch occupies residues 54–67 (AVRVQGIAGQPFVV). The tract at residues 89–268 (EASGALGSDF…PPSGFSRSRQ (180 aa)) is disordered. 6 positions are modified to phosphoserine: serine 96, serine 135, serine 137, serine 140, serine 155, and serine 165. Polar residues predominate over residues 166–191 (PGSTIDTAPLSSVDSLINKFDSQLGG). The span at 207 to 231 (EQRKRSKSLDSRLPRDTLEERERQS) shows a compositional bias: basic and acidic residues. Serine 214, serine 217, serine 258, serine 276, serine 338, and serine 351 each carry phosphoserine. Over residues 246–267 (GSSKQPSQSQSPSPPSGFSRSR) the composition is skewed to low complexity. The stretch at 358-1160 (VAGQGELTRK…SLEKDSWRKA (803 aa)) forms a coiled coil. Position 579 is an N6-acetyllysine (lysine 579). Positions 883–903 (ARREVADAQRQAKDWASEAEK) are enriched in basic and acidic residues. Disordered regions lie at residues 883-908 (ARRE…SGGL) and 1160-1181 (ASRS…EEFD). Residues 1161-1203 (SRSAAESALKHEGLSSDEEFDSVYDPSSIASLLTESNLQTSSC) form a tail region. Phosphoserine occurs at positions 1175, 1176, and 1182.

It belongs to the cingulin family. Homodimer. Interacts with TJP1/ZO1 and SPEF1.

It localises to the cell junction. It is found in the tight junction. Its function is as follows. Probably plays a role in the formation and regulation of the tight junction (TJ) paracellular permeability barrier. The polypeptide is Cingulin (Papio anubis (Olive baboon)).